We begin with the raw amino-acid sequence, 626 residues long: L-amino-acid oxidase 4 (626 aa).

Positions 1–18 are cleaved as a signal peptide; that stretch reads KSFFRSLVAASLVIVSYS. An N-linked (GlcNAc...) asparagine glycan is attached at Asn-54. Positions 75, 94, 95, 102, 122, and 123 each coordinate FAD. Arg-123 serves as a coordination point for L-glutamate. Arg-123 lines the L-glutamine pocket. Arg-123 is a binding site for L-lysine. Residue Arg-123 coordinates L-phenylalanine. 3 N-linked (GlcNAc...) asparagine glycosylation sites follow: Asn-164, Asn-193, and Asn-331. Val-334 is a binding site for FAD. Tyr-457 is an L-glutamate binding site. An L-glutamine-binding site is contributed by Tyr-457. Residue Tyr-457 participates in L-lysine binding. Tyr-457 provides a ligand contact to L-phenylalanine. Glu-551 is an FAD binding site. Position 558 (Ala-558) interacts with L-phenylalanine. FAD is bound by residues Trp-559 and Val-560.

The protein belongs to the flavin monoamine oxidase family. FIG1 subfamily. Homodimer. FAD is required as a cofactor. Post-translationally, out of the 4 glycosylated residues, Asn-54 is hypermannosylated. The presence of a hypermannosylated N-glycan on Asn-54 leads to adoption of a more active conformation in the absence of acid activation.

It is found in the secreted. The enzyme catalyses an L-alpha-amino acid + O2 + H2O = a 2-oxocarboxylate + H2O2 + NH4(+). The catalysed reaction is L-lysine + O2 + H2O = 6-amino-2-oxohexanoate + H2O2 + NH4(+). It carries out the reaction L-glutamate + O2 + H2O = H2O2 + 2-oxoglutarate + NH4(+). It catalyses the reaction L-arginine + O2 + H2O = 5-guanidino-2-oxopentanoate + H2O2 + NH4(+). The enzyme catalyses L-leucine + O2 + H2O = 4-methyl-2-oxopentanoate + H2O2 + NH4(+). The catalysed reaction is L-asparagine + O2 + H2O = 2-oxosuccinamate + H2O2 + NH4(+). It carries out the reaction L-histidine + O2 + H2O = 3-(imidazol-5-yl)pyruvate + H2O2 + NH4(+). It catalyses the reaction L-isoleucine + O2 + H2O = (S)-3-methyl-2-oxopentanoate + H2O2 + NH4(+). The enzyme catalyses L-methionine + O2 + H2O = 4-methylsulfanyl-2-oxobutanoate + H2O2 + NH4(+). The catalysed reaction is L-phenylalanine + O2 + H2O = 3-phenylpyruvate + H2O2 + NH4(+). It carries out the reaction L-tyrosine + O2 + H2O = 3-(4-hydroxyphenyl)pyruvate + H2O2 + NH4(+). It catalyses the reaction L-glutamine + O2 + H2O = 2-oxoglutaramate + H2O2 + NH4(+). The enzyme catalyses L-alanine + O2 + H2O = pyruvate + H2O2 + NH4(+). LAAO4 is activated by exposure to acidic pH, the detergent sodium dodecyl sulfate, or freezing. Its function is as follows. Catalyzes the oxidative deamination of L-amino acids with molecular oxygen to the corresponding alpha-keto acids and ammonia. L-glutamine shows the highest relative activity but LAAO4 has a broad substrate specificity, including L-amino acids with big aromatic, acidic and basic side chains. Methyl esters of these L-amino acids are also accepted, ethyl esters are converted but with lower activity, whereas D-Amino acids are not converted. No reaction is detected for small polar amino acids such as L-cysteine or L-aspartate, and very little for small, branched hydrophobic amino acids like L-valine. The polypeptide is L-amino-acid oxidase 4 (Hebeloma cylindrosporum).